Here is a 510-residue protein sequence, read N- to C-terminus: Glucose-6-phosphate 1-dehydrogenase (510 aa).

Residues 29 to 36 (GASGDLAK), Arg-63, and Lys-164 each bind NADP(+). D-glucose 6-phosphate is bound by residues Lys-164, 194–198 (HYLGK), Glu-232, and Asp-251. His-256 serves as the catalytic Proton acceptor. Lys-347 contributes to the NADP(+) binding site. Position 350 (Lys-350) interacts with D-glucose 6-phosphate. Residues Lys-356, Arg-360, and Arg-382 each contribute to the NADP(+) site. Gln-384 is a binding site for D-glucose 6-phosphate. NADP(+) is bound by residues 390–392 (YIK), 410–412 (DLT), and Arg-477.

The protein belongs to the glucose-6-phosphate dehydrogenase family.

The catalysed reaction is D-glucose 6-phosphate + NADP(+) = 6-phospho-D-glucono-1,5-lactone + NADPH + H(+). It functions in the pathway carbohydrate degradation; pentose phosphate pathway; D-ribulose 5-phosphate from D-glucose 6-phosphate (oxidative stage): step 1/3. In terms of biological role, catalyzes the rate-limiting step of the oxidative pentose-phosphate pathway, which represents a route for the dissimilation of carbohydrates besides glycolysis. The main function of this enzyme is to provide reducing power (NADPH) and pentose phosphates for fatty acid and nucleic acid synthesis. The chain is Glucose-6-phosphate 1-dehydrogenase (gsdA) from Aspergillus niger.